We begin with the raw amino-acid sequence, 1295 residues long: Phosphoribosylformylglycinamidine synthase (1295 aa).

Positions 305 to 327 are disordered; the sequence is WPGAATGSGGEIRDEGATGRGAK. ATP-binding positions include 307 to 318 and Ala678; that span reads GAATGSGGEIRD. Mg(2+) is bound by residues Glu718, Asn722, and Asp884. Ser886 contacts ATP. Residues 1042 to 1295 form the Glutamine amidotransferase type-1 domain; the sequence is VAVLREQGVN…IFRNARKQLG (254 aa). Cys1135 acts as the Nucleophile in catalysis. Residues His1260 and Glu1262 contribute to the active site.

The protein in the N-terminal section; belongs to the FGAMS family. Monomer.

It localises to the cytoplasm. It carries out the reaction N(2)-formyl-N(1)-(5-phospho-beta-D-ribosyl)glycinamide + L-glutamine + ATP + H2O = 2-formamido-N(1)-(5-O-phospho-beta-D-ribosyl)acetamidine + L-glutamate + ADP + phosphate + H(+). It functions in the pathway purine metabolism; IMP biosynthesis via de novo pathway; 5-amino-1-(5-phospho-D-ribosyl)imidazole from N(2)-formyl-N(1)-(5-phospho-D-ribosyl)glycinamide: step 1/2. In terms of biological role, phosphoribosylformylglycinamidine synthase involved in the purines biosynthetic pathway. Catalyzes the ATP-dependent conversion of formylglycinamide ribonucleotide (FGAR) and glutamine to yield formylglycinamidine ribonucleotide (FGAM) and glutamate. In Shigella boydii serotype 4 (strain Sb227), this protein is Phosphoribosylformylglycinamidine synthase.